Here is a 316-residue protein sequence, read N- to C-terminus: Glycine--tRNA ligase alpha subunit (316 aa).

It belongs to the class-II aminoacyl-tRNA synthetase family. In terms of assembly, tetramer of two alpha and two beta subunits.

It localises to the cytoplasm. It carries out the reaction tRNA(Gly) + glycine + ATP = glycyl-tRNA(Gly) + AMP + diphosphate. This chain is Glycine--tRNA ligase alpha subunit, found in Cupriavidus taiwanensis (strain DSM 17343 / BCRC 17206 / CCUG 44338 / CIP 107171 / LMG 19424 / R1) (Ralstonia taiwanensis (strain LMG 19424)).